Consider the following 105-residue polypeptide: Multidrug resistance protein EbrA (105 aa).

4 consecutive transmembrane segments (helical) span residues 2-22 (IAGYIFLLIAILSEAAAAAML), 35-55 (VLVVIGYGLAFYMMSLTLQVI), 60-80 (SYATWSGAGTVLTAIIGVLWF), and 87-104 (RNIAGIICLVSGVVLINL).

Belongs to the drug/metabolite transporter (DMT) superfamily. Small multidrug resistance (SMR) (TC 2.A.7.1) family. EbrA/EbrB subfamily. The efflux pump is composed of EbrA and EbrB.

Its subcellular location is the cell membrane. Its function is as follows. Part of a multidrug efflux pump. Confers resistance to cationic lipophilic dyes such as ethidium bromide, acriflavine, pyronine Y and safranin O. The efflux is probably coupled to an influx of protons. This is Multidrug resistance protein EbrA (ebrA) from Bacillus licheniformis (strain ATCC 14580 / DSM 13 / JCM 2505 / CCUG 7422 / NBRC 12200 / NCIMB 9375 / NCTC 10341 / NRRL NRS-1264 / Gibson 46).